Reading from the N-terminus, the 209-residue chain is MISSDYIKDKILEIENIQGNLIRSRISEFKRLKKSDKYTLFKELSFCILTANTSAELGLKCQAYINDGFYRLDYNDLREELIKVHYRFYNKRASYIIGARDIIDDLEYIVNMDDHFRAREILIERVKGIGYKEASHFLRNVGVFDFAILDKHIIKFMKNNYYIKYENNSSRRRYLENEIVFNELAKKFNMEPGVFDLYIWYIETGKILK.

Active-site residues include K132 and D150.

This sequence belongs to the type-2 OGG1 family.

The enzyme catalyses 2'-deoxyribonucleotide-(2'-deoxyribose 5'-phosphate)-2'-deoxyribonucleotide-DNA = a 3'-end 2'-deoxyribonucleotide-(2,3-dehydro-2,3-deoxyribose 5'-phosphate)-DNA + a 5'-end 5'-phospho-2'-deoxyribonucleoside-DNA + H(+). Catalyzes the excision of an oxidatively damaged form of guanine (7,8-dihydro-8-oxoguanine = 8-oxoG) from DNA. Also cleaves the DNA backbone at apurinic/apyrimidinic sites (AP sites). The sequence is that of 8-oxoguanine DNA glycosylase/AP lyase from Picrophilus torridus (strain ATCC 700027 / DSM 9790 / JCM 10055 / NBRC 100828 / KAW 2/3).